The primary structure comprises 227 residues: Neuromodulin (227 aa).

Residues 1-227 (MLCCMRRTKQ…EDPEADQEHA (227 aa)) form a disordered region. Residues Cys3 and Cys4 are each lipidated (S-palmitoyl cysteine). A compositionally biased stretch (basic and acidic residues) spans 9 to 32 (KQVEKNDEDQKIEQDGVKPEDKAH). Residues 31 to 60 (AHKAATKIQASFRGHITRKKLKGEKKGDAP) enclose the IQ domain. Ser41 carries the post-translational modification Phosphoserine; by PHK. The span at 54–84 (EKKGDAPAAEAEAKEKDDAPVADGVEKKEGD) shows a compositional bias: basic and acidic residues. The span at 85–97 (GSATTDAAPATSP) shows a compositional bias: low complexity. Ser86 and Ser96 each carry phosphoserine. Over residues 98–127 (KAEEPSKAGDAPSEEKKGEGDAAPSEEKAG) the composition is skewed to basic and acidic residues. Low complexity predominate over residues 128–139 (SAETESAAKATT). Thr138 is subject to Phosphothreonine. A phosphoserine mark is found at Ser142, Ser144, and Ser145. The segment covering 146–158 (KAEDGPAKEEPKQ) has biased composition (basic and acidic residues). Residues 159–193 (ADVPAAVTDAAATTPAAEDAATKAAQPPTETAESS) are compositionally biased toward low complexity. Phosphothreonine is present on Thr172. A phosphoserine; by CK2 mark is found at Ser192 and Ser193. Positions 202–215 (VDEAKPKESARQDE) are enriched in basic and acidic residues. Acidic residues predominate over residues 216-227 (GKEDPEADQEHA).

Belongs to the neuromodulin family. In terms of assembly, identified in a complex containing FGFR4, NCAM1, CDH2, PLCG1, FRS2, SRC, SHC1, GAP43 and CTTN. Interacts (via IQ domain) with calmodulin. Binds calmodulin with a greater affinity in the absence of Ca(2+) than in its presence. Post-translationally, phosphorylated. Phosphorylation of this protein by a protein kinase C is specifically correlated with certain forms of synaptic plasticity. In terms of processing, palmitoylated by ZDHHC3. Palmitoylation is regulated by ARF6 and is essential for plasma membrane association and axonal and dendritic filopodia induction. Deacylated by LYPLA2. Expressed in the hippocampus (at protein level). Expressed in the dorsal root ganglion and the spinal cord (at protein level).

The protein resides in the cell membrane. Its subcellular location is the cell projection. The protein localises to the growth cone membrane. It localises to the synapse. It is found in the filopodium membrane. The protein resides in the perikaryon. Its subcellular location is the dendrite. The protein localises to the axon. It localises to the cytoplasm. Functionally, this protein is associated with nerve growth. It is a major component of the motile 'growth cones' that form the tips of elongating axons. Plays a role in axonal and dendritic filopodia induction. The polypeptide is Neuromodulin (Gap43) (Mus musculus (Mouse)).